A 269-amino-acid chain; its full sequence is 5'-nucleotidase SurE (269 aa).

A divalent metal cation-binding residues include D8, D9, S40, and N95.

The protein belongs to the SurE nucleotidase family. The cofactor is a divalent metal cation.

The protein localises to the cytoplasm. It carries out the reaction a ribonucleoside 5'-phosphate + H2O = a ribonucleoside + phosphate. Its function is as follows. Nucleotidase that shows phosphatase activity on nucleoside 5'-monophosphates. In Nitratidesulfovibrio vulgaris (strain DSM 19637 / Miyazaki F) (Desulfovibrio vulgaris), this protein is 5'-nucleotidase SurE.